Here is a 351-residue protein sequence, read N- to C-terminus: uncharacterized protein (351 aa).

Positions 1–27 (MKNKKRVLIASSLSCAILLLSAATTQA) are cleaved as a signal peptide. The segment at 29–71 (SAHKDSQDQNKKEHVDKSQQKDKRNVTNKDKNSTVPDDIGKNG) is disordered. A compositionally biased stretch (basic and acidic residues) spans 30–60 (AHKDSQDQNKKEHVDKSQQKDKRNVTNKDKN).

It belongs to the aerolysin family.

This is an uncharacterized protein from Staphylococcus aureus (strain Mu50 / ATCC 700699).